A 101-amino-acid polypeptide reads, in one-letter code: Small ribosomal subunit protein bS6 (101 aa).

Belongs to the bacterial ribosomal protein bS6 family.

Functionally, binds together with bS18 to 16S ribosomal RNA. This Staphylococcus saprophyticus subsp. saprophyticus (strain ATCC 15305 / DSM 20229 / NCIMB 8711 / NCTC 7292 / S-41) protein is Small ribosomal subunit protein bS6.